Here is a 181-residue protein sequence, read N- to C-terminus: Large ribosomal subunit protein uL6 (181 aa).

This sequence belongs to the universal ribosomal protein uL6 family. As to quaternary structure, part of the 50S ribosomal subunit.

Functionally, this protein binds to the 23S rRNA, and is important in its secondary structure. It is located near the subunit interface in the base of the L7/L12 stalk, and near the tRNA binding site of the peptidyltransferase center. This is Large ribosomal subunit protein uL6 from Vesicomyosocius okutanii subsp. Calyptogena okutanii (strain HA).